A 711-amino-acid chain; its full sequence is Polyribonucleotide nucleotidyltransferase (711 aa).

Residues D486 and D492 each contribute to the Mg(2+) site. The KH domain maps to 553–612 (PRIHTIKINPDKIKDVIGKGGSVIRALTEETGTTIEIEDDGTVKIAATDGDKAQHAIRRI). The region spanning 622 to 690 (GRIYNGKVTR…RQGRVRLSIK (69 aa)) is the S1 motif domain. The segment at 691–711 (EATEQTPSAAAPEAPVAEQGE) is disordered. Residues 699–711 (AAAPEAPVAEQGE) are compositionally biased toward low complexity.

This sequence belongs to the polyribonucleotide nucleotidyltransferase family. Component of the RNA degradosome, which is a multiprotein complex involved in RNA processing and mRNA degradation. Requires Mg(2+) as cofactor.

It is found in the cytoplasm. It carries out the reaction RNA(n+1) + phosphate = RNA(n) + a ribonucleoside 5'-diphosphate. Functionally, involved in mRNA degradation. Catalyzes the phosphorolysis of single-stranded polyribonucleotides processively in the 3'- to 5'-direction. This is Polyribonucleotide nucleotidyltransferase from Klebsiella pneumoniae (strain 342).